The following is a 210-amino-acid chain: Holliday junction resolvase RecU (210 aa).

Mg(2+) is bound by residues threonine 93, aspartate 95, glutamate 108, and glutamine 127.

The protein belongs to the RecU family. The cofactor is Mg(2+).

It is found in the cytoplasm. The catalysed reaction is Endonucleolytic cleavage at a junction such as a reciprocal single-stranded crossover between two homologous DNA duplexes (Holliday junction).. In terms of biological role, endonuclease that resolves Holliday junction intermediates in genetic recombination. Cleaves mobile four-strand junctions by introducing symmetrical nicks in paired strands. Promotes annealing of linear ssDNA with homologous dsDNA. Required for DNA repair, homologous recombination and chromosome segregation. The polypeptide is Holliday junction resolvase RecU (Lactobacillus helveticus (strain DPC 4571)).